A 589-amino-acid chain; its full sequence is Coronatine-insensitive protein homolog 2 (589 aa).

In terms of domain architecture, F-box spans I18–V59. The jasmonate site is built by R87, R352, R414, and R501.

Interacts with TIFY9/JAZ5, TIFY11C/JAZ11 and TIFY11D/JAZ12 in a coronatine-dependent manner.

Its function is as follows. Involved in jasmonate (JA) signaling. Required for jasmonate signaling in plant defense responses. Component of SCF(COI1) E3 ubiquitin ligase complexes, which may mediate the ubiquitination and subsequent proteasomal degradation of target proteins, including TIFY/JAZ family. The protein is Coronatine-insensitive protein homolog 2 of Oryza sativa subsp. indica (Rice).